The following is an 89-amino-acid chain: Heat shock protein 30A (89 aa).

Composition is skewed to basic and acidic residues over residues 1-11 (MRNNVERRMQR) and 19-39 (LSKDTEMRRITDQNRQSRESE). Residues 1–55 (MRNNVERRMQRVNEACRLLSKDTEMRRITDQNRQSRESEGTSPNSGKDGKDHFEL) are disordered. Positions 35–89 (SRESEGTSPNSGKDGKDHFELTLNVRDFSPHELTVKTQGRRVIVTGKHERKSDTE) constitute a sHSP domain.

The protein belongs to the small heat shock protein (HSP20) family.

This chain is Heat shock protein 30A (hsp30a), found in Xenopus laevis (African clawed frog).